The primary structure comprises 361 residues: NAD(P)H-quinone oxidoreductase subunit 1, chloroplastic (361 aa).

6 helical membrane passes run 25–45 (IWLLVPILTLVLGITIGVLVI), 102–122 (VAVVSILLSYSVIPFGYHLVL), 125–145 (LSIGVFLWIAISSIAPIGLLM), 246–266 (YSGIKFGLFYVASYLNLLVSS), 298–318 (VFGTTISLLITLAKAYLFLFI), and 334–354 (LLNLGWKSLLPIALGNLLLTT).

The protein belongs to the complex I subunit 1 family. As to quaternary structure, NDH is composed of at least 16 different subunits, 5 of which are encoded in the nucleus.

The protein resides in the plastid. It localises to the chloroplast thylakoid membrane. It catalyses the reaction a plastoquinone + NADH + (n+1) H(+)(in) = a plastoquinol + NAD(+) + n H(+)(out). The catalysed reaction is a plastoquinone + NADPH + (n+1) H(+)(in) = a plastoquinol + NADP(+) + n H(+)(out). Its function is as follows. NDH shuttles electrons from NAD(P)H:plastoquinone, via FMN and iron-sulfur (Fe-S) centers, to quinones in the photosynthetic chain and possibly in a chloroplast respiratory chain. The immediate electron acceptor for the enzyme in this species is believed to be plastoquinone. Couples the redox reaction to proton translocation, and thus conserves the redox energy in a proton gradient. This chain is NAD(P)H-quinone oxidoreductase subunit 1, chloroplastic, found in Nymphaea alba (White water-lily).